Consider the following 339-residue polypeptide: Ferredoxin--NADP reductase (339 aa).

7 residues coordinate FAD: aspartate 36, glutamine 44, tyrosine 49, valine 89, phenylalanine 123, aspartate 290, and threonine 331.

It belongs to the ferredoxin--NADP reductase type 2 family. As to quaternary structure, homodimer. It depends on FAD as a cofactor.

The catalysed reaction is 2 reduced [2Fe-2S]-[ferredoxin] + NADP(+) + H(+) = 2 oxidized [2Fe-2S]-[ferredoxin] + NADPH. The sequence is that of Ferredoxin--NADP reductase from Acidiphilium cryptum (strain JF-5).